The sequence spans 340 residues: Predicted GPI-anchored protein 46 (340 aa).

Residues 1 to 29 (MKILLIYSMTPKLVIWFTLFVLCLQMGDT) form the signal peptide. Residues 99 to 115 (SETTTTTTQESETSIAT) are compositionally biased toward low complexity. Disordered regions lie at residues 99–154 (SETT…SLSS) and 181–212 (MSSSSSSSSGSLRDKSKLKQENKQLQSRIKNY). A glycan (N-linked (GlcNAc...) asparagine) is linked at N127. The span at 182 to 191 (SSSSSSSSGS) shows a compositional bias: low complexity. Over residues 192 to 202 (LRDKSKLKQEN) the composition is skewed to basic and acidic residues. N-linked (GlcNAc...) asparagine glycosylation is present at N270. N314 is lipidated: GPI-anchor amidated asparagine. The propeptide at 315–340 (SAPLLWIKISKPTVCLVIALTFLLLG) is removed in mature form.

The protein localises to the cell membrane. The protein resides in the secreted. The sequence is that of Predicted GPI-anchored protein 46 (PGA46) from Candida albicans (strain SC5314 / ATCC MYA-2876) (Yeast).